We begin with the raw amino-acid sequence, 303 residues long: NAD(+)--arginine ADP-ribosyltransferase Lart1 (303 aa).

It localises to the secreted. The enzyme catalyses L-arginyl-[protein] + NAD(+) = N(omega)-(ADP-D-ribosyl)-L-arginyl-[protein] + nicotinamide + H(+). Functionally, ADP-ribosyltransferase that targets a specific class of NAD(+)-dependent glutamate dehydrogenase (GDH) enzymes found in fungi and protists, including many natural hosts of Legionella. Acts by targeting a conserved arginine residue in the NAD(+)-binding pocket of GDH, thereby blocking oxidative deamination of glutamate. Lart1 may target amoeba GDH to prevent a conserved stress response. In vitro, acts on Glud2 from the amoeba Dictyostelium discoideum (DdGluD2) and yeast Gdh2p but does not act on human or Legionella GDH homologs. This Legionella pneumophila subsp. pneumophila (strain Philadelphia 1 / ATCC 33152 / DSM 7513) protein is NAD(+)--arginine ADP-ribosyltransferase Lart1.